Reading from the N-terminus, the 384-residue chain is Secreted effector protein EspF(U) (384 aa).

6 tandem repeats follow at residues 96–142, 143–189, 190–236, 237–283, 284–330, and 331–377. The segment at 96–377 is 6 X 48 AA approximate tandem repeats; that stretch reads IXPARSMAEH…RLMQHLAEHG (282 aa). The disordered stretch occupies residues 247–266; the sequence is IPPAPNWPAPPPPVQNEQSR. Positions 248–260 are enriched in pro residues; sequence PPAPNWPAPPPPV.

The protein belongs to the EspF(U)/TccP family. Interacts with host BAIAP2 and host WASL/N-WASP. Can also interact with host proteins BAIAP2L1 and WAS/WASP.

Its subcellular location is the secreted. The protein resides in the host cytoplasm. In terms of biological role, required for efficient pedestal formation in host epithelial cells during infection. Acts as an intermediate between Tir (via host BAIAP2) and host WASL/N-WASP. Directly binds and activates WASL/N-WASP, which stimulates actin polymerization and leads to the formation of actin pedestals at the sites of bacterial adhesion. The chain is Secreted effector protein EspF(U) (espF(U)) from Escherichia coli O157:H7.